The primary structure comprises 175 residues: VQ motif-containing protein 25 (175 aa).

The short motif at 50 to 59 is the VQ element; that stretch reads FRELVQSLTG.

Its subcellular location is the nucleus. In terms of biological role, may function as negative regulator of plant defense. In Arabidopsis thaliana (Mouse-ear cress), this protein is VQ motif-containing protein 25.